Reading from the N-terminus, the 392-residue chain is tRNA (guanine-N(7)-)-methyltransferase (392 aa).

S-adenosyl-L-methionine contacts are provided by Glu-123, Glu-148, and Asp-175. Positions 201 and 231 each coordinate substrate.

Belongs to the class I-like SAM-binding methyltransferase superfamily. TrmB family.

It carries out the reaction guanosine(46) in tRNA + S-adenosyl-L-methionine = N(7)-methylguanosine(46) in tRNA + S-adenosyl-L-homocysteine. Its pathway is tRNA modification; N(7)-methylguanine-tRNA biosynthesis. Catalyzes the formation of N(7)-methylguanine at position 46 (m7G46) in tRNA. In Campylobacter jejuni (strain RM1221), this protein is tRNA (guanine-N(7)-)-methyltransferase.